Here is a 425-residue protein sequence, read N- to C-terminus: Inhibin beta A chain (425 aa).

Positions 1–20 (MPLLWLRGFLLASCWIIVRS) are cleaved as a signal peptide. A propeptide spanning residues 21–309 (SPTPGSEGHS…EDHPHRRRRR (289 aa)) is cleaved from the precursor. The N-linked (GlcNAc...) asparagine glycan is linked to Asn-165. A disordered region spans residues 260–289 (KKRKEEEGEGKKRDGEGGAGGDEEKEQSHR). A compositionally biased stretch (basic and acidic residues) spans 263–275 (KEEEGEGKKRDGE). 4 cysteine pairs are disulfide-bonded: Cys-313-Cys-321, Cys-320-Cys-390, Cys-349-Cys-422, and Cys-353-Cys-424.

It belongs to the TGF-beta family. Dimeric, linked by one or more disulfide bonds. Inhibin A is a dimer of alpha/INHA and beta-A/INHBA. Activin A is a homodimer of beta-A/INHBA. Activin AB is a dimer of beta-A/INHBA and beta-B/INHBB. Interacts with FST and FSTL3; these interactions prevent activin A interaction to its type II receptor. Activin A interacts with ACVR2A. Activin A interacts with BMPR2. Inhibin A interacts with ACVR1; this interaction creates a non-signaling complex (NSC) that inhibits ACVR1-mediated BMP signaling. Inhibin A interacts with ACVR2A.

It is found in the secreted. Inhibins/activins are involved in regulating a number of diverse functions such as hypothalamic and pituitary hormone secretion, gonadal hormone secretion, germ cell development and maturation, erythroid differentiation, insulin secretion, nerve cell survival, embryonic axial development or bone growth, depending on their subunit composition. In terms of biological role, activin A is a homodimer of INHBA that plays a role in several essential biological processes including embryonic development, stem cell maintenance and differentiation, haematopoiesis, cell proliferation and tissue fibrosis. Signals through type I (such as ACVR1B or ACVR1C) and type II receptors (such as ACVR2A, ACVR2B or BMPR2) which, upon ligand binding, phosphorylate SMAD2 and SMAD3 intracellular signaling mediators that form a complex with SMAD4, translocate to the nucleus and modulate gene expression. Can also activate alternative non-canonical intracellular signaling pathways including the p38 MAPK, extracellular signal-regulated kinases 1/2 (ERK1/2) and c-Jun N-terminal kinases (JNKs) to modulate cell migration and differentiation. Alternatively, promotes osteoblastic differentiation via ACVRL1-SMAD1/5/9 pathway. In addition, can engage the type I receptor ACVR1 to form an ACVR1-activin A-type II receptor non-signaling complex (NSC) that renders receptors unavailable for engagement with BMPs, hence resulting in an apparent inhibition of ACVR1-mediated BMP signaling. Functionally, inhibin A is a dimer of alpha/INHA and beta-A/INHBA that functions as a feedback regulator in the hypothalamic-pituitary-gonadal (HPG) axis. Inhibits the secretion of FSH from the anterior pituitary gland by acting on pituitary gonadotrope cells. Antagonizes activin A by binding to the proteoglycan, betaglycan, and forming a stable complex with and, thereby, sequestering type II activin receptors while excluding type I receptor. This Ovis aries (Sheep) protein is Inhibin beta A chain (INHBA).